The chain runs to 450 residues: Protein tailless (450 aa).

Residues histidine 31–histidine 108 constitute a DNA-binding region (nuclear receptor). 2 NR C4-type zinc fingers span residues cysteine 34–cysteine 54 and cysteine 70–cysteine 96. The 262-residue stretch at valine 187–arginine 448 folds into the NR LBD domain.

This sequence belongs to the nuclear hormone receptor family. NR2 subfamily. Monomer.

It is found in the nucleus. In terms of biological role, orphan receptor that binds DNA as a monomer to hormone response elements (HRE) containing an extended core motif half-site sequence 5'-AAGTCA-3' in which the 5' flanking nucleotides participate in determining receptor specificity. This receptor binds to the consensus sequence [AG][AG]AAGTCAA. Plays a key role in the establishment of non-metameric domains at the anterior and posterior poles of the embryo. It may also play a role in the nervous system. The maternal terminal pathway activates the tll gene in the termini; TLL activity then represses segmentation and activates terminal-specific genes in these domains. Involved in the regulation of early eye development. In the embryonic visual system anlage drives cells to optic lobe as opposed to Bolwig's organ fate. This is Protein tailless (tll) from Drosophila virilis (Fruit fly).